A 54-amino-acid polypeptide reads, in one-letter code: uncharacterized protein (54 aa).

This is an uncharacterized protein from Rhizobium etli.